Reading from the N-terminus, the 445-residue chain is Glucose-6-phosphate isomerase 2 (445 aa).

The Proton donor role is filled by glutamate 285. Active-site residues include histidine 306 and lysine 420.

The protein belongs to the GPI family. Homodimer.

The protein resides in the cytoplasm. It catalyses the reaction alpha-D-glucose 6-phosphate = beta-D-fructose 6-phosphate. It functions in the pathway carbohydrate biosynthesis; gluconeogenesis. Its pathway is carbohydrate degradation; glycolysis; D-glyceraldehyde 3-phosphate and glycerone phosphate from D-glucose: step 2/4. In terms of biological role, catalyzes the reversible isomerization of glucose-6-phosphate to fructose-6-phosphate. The chain is Glucose-6-phosphate isomerase 2 from Geobacillus stearothermophilus (Bacillus stearothermophilus).